Consider the following 206-residue polypeptide: Superoxide dismutase [Mn] (206 aa).

Mn(2+) contacts are provided by His27, His82, Asp168, and His172.

This sequence belongs to the iron/manganese superoxide dismutase family. As to quaternary structure, homodimer. Requires Mn(2+) as cofactor.

The enzyme catalyses 2 superoxide + 2 H(+) = H2O2 + O2. Its function is as follows. Destroys superoxide anion radicals which are normally produced within the cells and which are toxic to biological systems. The polypeptide is Superoxide dismutase [Mn] (sodA) (Salmonella typhimurium (strain LT2 / SGSC1412 / ATCC 700720)).